We begin with the raw amino-acid sequence, 229 residues long: Uracil-DNA glycosylase (229 aa).

The active-site Proton acceptor is the Asp70.

It belongs to the uracil-DNA glycosylase (UDG) superfamily. UNG family.

It localises to the cytoplasm. It catalyses the reaction Hydrolyzes single-stranded DNA or mismatched double-stranded DNA and polynucleotides, releasing free uracil.. In terms of biological role, excises uracil residues from the DNA which can arise as a result of misincorporation of dUMP residues by DNA polymerase or due to deamination of cytosine. The sequence is that of Uracil-DNA glycosylase from Chlamydia trachomatis serovar A (strain ATCC VR-571B / DSM 19440 / HAR-13).